Consider the following 310-residue polypeptide: Mas-related G-protein coupled receptor member E (310 aa).

Topologically, residues 1-22 (MTSLSVHTDSPSTQGEMAFNLT) are extracellular. Residue Asn-20 is glycosylated (N-linked (GlcNAc...) asparagine). A helical transmembrane segment spans residues 23-43 (ILSLTELLSLGGLLGNGVALW). The Cytoplasmic segment spans residues 44-60 (LLNQNVYRNPFSIYLLD). The chain crosses the membrane as a helical span at residues 61 to 81 (VACADLIFLCCHMVAIIPELL). The Extracellular segment spans residues 82–92 (QDQLNFPEFVH). Residues 93–113 (ISLTMLRFFCYIVGLSLLAAI) form a helical membrane-spanning segment. Residues 114 to 133 (STEQCLATLFPAWYLCRRPR) are Cytoplasmic-facing. A helical membrane pass occupies residues 134–154 (YLTTCVCALIWVLCLLLDLLL). Topologically, residues 155-174 (SGACTQFFGAPSYHLCDMLW) are extracellular. The helical transmembrane segment at 175-195 (LVVAVLLAALCCTMCVTSLLL) threads the bilayer. Over 196–213 (LLRVERGPERHQPRGFPT) the chain is Cytoplasmic. A helical membrane pass occupies residues 214 to 234 (LVLLAVLLFLFCGLPFGIFWL). Topologically, residues 235-248 (SKNLSWHIPLYFYH) are extracellular. N-linked (GlcNAc...) asparagine glycosylation is present at Asn-237. Residues 249–269 (FSFFMASVHSAAKPAIYFFLG) form a helical membrane-spanning segment. Topologically, residues 270–310 (STPGQRFREPLRLVLQRALGDEAELGAGREASQGGLVDMTV) are cytoplasmic.

This sequence belongs to the G-protein coupled receptor 1 family. Mas subfamily.

The protein localises to the cell membrane. Its function is as follows. Orphan receptor. May regulate nociceptor function and/or development, including the sensation or modulation of pain. The sequence is that of Mas-related G-protein coupled receptor member E (Mrgpre) from Mus musculus (Mouse).